The following is a 160-amino-acid chain: uncharacterized protein (160 aa).

Its subcellular location is the cytoplasm. The protein localises to the nucleus. This is an uncharacterized protein from Schizosaccharomyces pombe (strain 972 / ATCC 24843) (Fission yeast).